Here is a 127-residue protein sequence, read N- to C-terminus: Modulator protein MzrA (127 aa).

Residues 1–10 lie on the Cytoplasmic side of the membrane; it reads MGLQNMTLRR. A helical transmembrane segment spans residues 11-31; sequence FTLSMSALLLLCALLWLWAAL. Residues 32 to 127 are Periplasmic-facing; sequence EQQESSLAIR…RLRDAPHRLG (96 aa).

The protein belongs to the MzrA family. As to quaternary structure, interacts with EnvZ.

The protein resides in the cell inner membrane. Its function is as follows. Modulates the activity of the EnvZ/OmpR two-component regulatory system, probably by directly modulating EnvZ enzymatic activity and increasing stability of phosphorylated OmpR. This chain is Modulator protein MzrA, found in Enterobacter lignolyticus (strain SCF1).